Reading from the N-terminus, the 309-residue chain is MVRLTLDLIARNSNLKPRKEETISQCLKKITHINFSDKNIDAIEDLSLCKNLSVLYLYDNCISQITNLNYATNLTHLYLQNNCISCIENLRSLKKLEKLYLGGNYIAVIEGLEGLGELRELHVENQRLPLGEKLLFDPRTLHSLAKSLCILNISNNNIDDITDLELLENLNQLIAVDNQLLHVKDLEFLLNKLMKLWKIDLNGNPVCLKPKYRDRLILVSKSLEFLDGKEIKNIERQFLMNWKASKDAKKISKKRSSKNEDASNSLISNFKTMHHIVPVYYPQVGKPKLAFFSEIQRYPVNANASPESS.

7 LRR repeats span residues 29 to 50, 51 to 72, 73 to 94, 95 to 116, 117 to 138, 147 to 168, and 169 to 190; these read KITH…SLCK, NLSV…NYAT, NLTH…RSLK, KLEK…EGLG, ELRE…LFDP, SLCI…ELLE, and NLNQ…EFLL. Residues 204–242 form the LRRCT domain; sequence NPVCLKPKYRDRLILVSKSLEFLDGKEIKNIERQFLMNW.

In terms of assembly, interacts with PPP1CC isoform gamma-2; the interaction is direct. Interacts with actin, dynein, KIF5B, KIFC1 and tubulin. Associates with microtubules. Post-translationally, phosphorylated; in the testis.

It is found in the cytoplasm. The protein localises to the cytoskeleton. It localises to the microtubule organizing center. The protein resides in the centrosome. In terms of biological role, regulates phosphatase activity of protein phosphatase 1 (PP1) complexes in the testis. This Homo sapiens (Human) protein is Protein phosphatase 1 regulatory subunit 42.